Reading from the N-terminus, the 217-residue chain is Cytidylate kinase (217 aa).

Position 10–18 (10–18) interacts with ATP; the sequence is GPAGAGKST.

It belongs to the cytidylate kinase family. Type 1 subfamily.

It is found in the cytoplasm. The enzyme catalyses CMP + ATP = CDP + ADP. It carries out the reaction dCMP + ATP = dCDP + ADP. The polypeptide is Cytidylate kinase (Clostridium botulinum (strain ATCC 19397 / Type A)).